The following is a 391-amino-acid chain: Na(+)/H(+) antiporter NhaA (391 aa).

Transmembrane regions (helical) follow at residues A14–L34, L59–V79, S95–F115, V124–L144, V154–F174, T177–L197, L213–I233, F261–L281, I292–V312, V331–V351, and L363–V383.

The protein belongs to the NhaA Na(+)/H(+) (TC 2.A.33) antiporter family.

The protein resides in the cell inner membrane. It carries out the reaction Na(+)(in) + 2 H(+)(out) = Na(+)(out) + 2 H(+)(in). In terms of biological role, na(+)/H(+) antiporter that extrudes sodium in exchange for external protons. The polypeptide is Na(+)/H(+) antiporter NhaA (Shewanella pealeana (strain ATCC 700345 / ANG-SQ1)).